The following is a 140-amino-acid chain: Putative nickel-responsive regulator 3 (140 aa).

His-81, His-92, His-94, and Cys-100 together coordinate Ni(2+).

It belongs to the transcriptional regulatory CopG/NikR family. Ni(2+) is required as a cofactor.

In terms of biological role, transcriptional regulator. This Methanosarcina acetivorans (strain ATCC 35395 / DSM 2834 / JCM 12185 / C2A) protein is Putative nickel-responsive regulator 3.